Reading from the N-terminus, the 413-residue chain is Gamma-glutamyl phosphate reductase (413 aa).

Belongs to the gamma-glutamyl phosphate reductase family.

It localises to the cytoplasm. The catalysed reaction is L-glutamate 5-semialdehyde + phosphate + NADP(+) = L-glutamyl 5-phosphate + NADPH + H(+). It participates in amino-acid biosynthesis; L-proline biosynthesis; L-glutamate 5-semialdehyde from L-glutamate: step 2/2. Catalyzes the NADPH-dependent reduction of L-glutamate 5-phosphate into L-glutamate 5-semialdehyde and phosphate. The product spontaneously undergoes cyclization to form 1-pyrroline-5-carboxylate. This Salinispora tropica (strain ATCC BAA-916 / DSM 44818 / JCM 13857 / NBRC 105044 / CNB-440) protein is Gamma-glutamyl phosphate reductase.